Reading from the N-terminus, the 541-residue chain is Formimidoyltransferase-cyclodeaminase (541 aa).

A formiminotransferase N-subdomain region spans residues 1–181 (MSQLVECVPN…GATVAGARKF (181 aa)). Residue His-82 is the For formimidoyltransferase activity of the active site. Folate is bound at residue 163–172 (GPSAFVPSWG). Residues 182 to 326 (LLAFNINLLS…PKERIIEYLV (145 aa)) form a formiminotransferase C-subdomain region. Residues 327 to 334 (PEAGPEQS) form a linker region. Residues 335–541 (LLHKPLRTFV…VLDRLEARQA (207 aa)) are cyclodeaminase/cyclohydrolase. Catalysis depends on Asp-412, which acts as the For cyclodeaminase activity. At Ser-520 the chain carries Phosphoserine.

It in the C-terminal section; belongs to the cyclodeaminase/cyclohydrolase family. This sequence in the N-terminal section; belongs to the formiminotransferase family. As to quaternary structure, homooctamer, including four polyglutamate binding sites. The subunits are arranged as a tetramer of dimers, and form a planar ring-shaped structure.

It is found in the cytoplasm. Its subcellular location is the cytosol. The protein resides in the golgi apparatus. The protein localises to the cytoskeleton. It localises to the microtubule organizing center. It is found in the centrosome. Its subcellular location is the centriole. It catalyses the reaction 5-formimidoyltetrahydrofolate + L-glutamate = N-formimidoyl-L-glutamate + (6S)-5,6,7,8-tetrahydrofolate. It carries out the reaction 5-formimidoyltetrahydrofolate + 2 H(+) = (6R)-5,10-methenyltetrahydrofolate + NH4(+). The protein operates within amino-acid degradation; L-histidine degradation into L-glutamate; L-glutamate from N-formimidoyl-L-glutamate (transferase route): step 1/1. Folate-dependent enzyme, that displays both transferase and deaminase activity. Serves to channel one-carbon units from formiminoglutamate to the folate pool. Its function is as follows. Binds and promotes bundling of vimentin filaments originating from the Golgi. This is Formimidoyltransferase-cyclodeaminase (FTCD) from Sus scrofa (Pig).